The primary structure comprises 465 residues: Uronate isomerase (465 aa).

Belongs to the metallo-dependent hydrolases superfamily. Uronate isomerase family.

The catalysed reaction is D-glucuronate = D-fructuronate. It carries out the reaction aldehydo-D-galacturonate = keto-D-tagaturonate. It functions in the pathway carbohydrate metabolism; pentose and glucuronate interconversion. This Bacillus velezensis (strain DSM 23117 / BGSC 10A6 / LMG 26770 / FZB42) (Bacillus amyloliquefaciens subsp. plantarum) protein is Uronate isomerase.